The chain runs to 420 residues: Anaerobic glycerol-3-phosphate dehydrogenase subunit B (420 aa).

It belongs to the anaerobic G-3-P dehydrogenase subunit B family. As to quaternary structure, composed of a catalytic GlpA/B dimer and of membrane bound GlpC. FMN is required as a cofactor.

The catalysed reaction is a quinone + sn-glycerol 3-phosphate = dihydroxyacetone phosphate + a quinol. The protein operates within polyol metabolism; glycerol degradation via glycerol kinase pathway; glycerone phosphate from sn-glycerol 3-phosphate (anaerobic route): step 1/1. Conversion of glycerol 3-phosphate to dihydroxyacetone. Uses fumarate or nitrate as electron acceptor. The protein is Anaerobic glycerol-3-phosphate dehydrogenase subunit B of Pectobacterium atrosepticum (strain SCRI 1043 / ATCC BAA-672) (Erwinia carotovora subsp. atroseptica).